An 875-amino-acid chain; its full sequence is uncharacterized protein (875 aa).

Disordered regions lie at residues K29–I48, E481–K510, and D680–N705. The span at N31–T44 shows a compositional bias: low complexity. The span at K695–N705 shows a compositional bias: basic and acidic residues.

This is an uncharacterized protein from Plasmodium falciparum (isolate 3D7).